A 577-amino-acid polypeptide reads, in one-letter code: (E)-beta-farnesene synthase (577 aa).

Mg(2+) is bound by residues aspartate 327, aspartate 331, aspartate 474, serine 478, and glutamate 482. The DDXXD motif signature appears at 327-331 (DDTFD).

Belongs to the terpene synthase family. Requires Mg(2+) as cofactor. It depends on Co(2+) as a cofactor. Mn(2+) is required as a cofactor. Expressed in flowers.

It localises to the cytoplasm. It carries out the reaction (2E,6E)-farnesyl diphosphate = (E)-beta-farnesene + diphosphate. The protein operates within secondary metabolite biosynthesis; terpenoid biosynthesis. Strongly inhibited by manganese at concentration higher than 20 uM. Its function is as follows. Sesquiterpene cyclase catalyzing the production of beta-farnesene from farnesyl diphosphate. Unable to use geranyl diphosphate as substrate. The sequence is that of (E)-beta-farnesene synthase (CASC125) from Artemisia annua (Sweet wormwood).